We begin with the raw amino-acid sequence, 297 residues long: Large ribosomal subunit protein uL18 (297 aa).

Position 2 is an N-acetylglycine (G2). K5 and K48 each carry N6-acetyllysine. S185 bears the Phosphoserine mark. Residue K220 is modified to N6-acetyllysine; alternate. A Glycyl lysine isopeptide (Lys-Gly) (interchain with G-Cter in SUMO1); alternate cross-link involves residue K220. K220 is covalently cross-linked (Glycyl lysine isopeptide (Lys-Gly) (interchain with G-Cter in SUMO2); alternate). T232 carries the post-translational modification Phosphothreonine. Residues 253-297 (YEKKPKREVKKKRWNRPKMSLAQKKDRVAQKKASFLRAQERAAES) are disordered. The span at 258–268 (KREVKKKRWNR) shows a compositional bias: basic residues. S272 is subject to Phosphoserine.

It belongs to the universal ribosomal protein uL18 family. In terms of assembly, component of the large ribosomal subunit (LSU). Part of the 5S RNP complex, which is a LSU subcomplex composed of the 5S RNA, RPL5 and RPL11. Component of a hexameric 5S RNP precursor complex, composed of 5S RNA, RRS1, RPF2/BXDC1, RPL5, RPL11 and HEATR3; this complex acts as a precursor for ribosome assembly. Interacts with NVL in an ATP-dependent manner. Interacts with RRP1B. Interacts with IPO5, IPO7 and KPNB1; these interactions may be involved in RPL5 nuclear import for the assembly of ribosomal subunits. Interacts with RRP1B.

It localises to the cytoplasm. The protein resides in the nucleus. The protein localises to the nucleolus. Component of the ribosome, a large ribonucleoprotein complex responsible for the synthesis of proteins in the cell. The small ribosomal subunit (SSU) binds messenger RNAs (mRNAs) and translates the encoded message by selecting cognate aminoacyl-transfer RNA (tRNA) molecules. The large subunit (LSU) contains the ribosomal catalytic site termed the peptidyl transferase center (PTC), which catalyzes the formation of peptide bonds, thereby polymerizing the amino acids delivered by tRNAs into a polypeptide chain. The nascent polypeptides leave the ribosome through a tunnel in the LSU and interact with protein factors that function in enzymatic processing, targeting, and the membrane insertion of nascent chains at the exit of the ribosomal tunnel. As part of the 5S RNP/5S ribonucleoprotein particle it is an essential component of the LSU, required for its formation and the maturation of rRNAs. It also couples ribosome biogenesis to p53/TP53 activation. As part of the 5S RNP it accumulates in the nucleoplasm and inhibits MDM2, when ribosome biogenesis is perturbed, mediating the stabilization and the activation of TP53. The chain is Large ribosomal subunit protein uL18 (Rpl5) from Rattus norvegicus (Rat).